Consider the following 270-residue polypeptide: Probable inositol 1-monophosphatase ImpA (270 aa).

Mg(2+) is bound by residues glutamate 69, aspartate 85, isoleucine 87, and aspartate 88. Glutamate 69 is a substrate binding site. Residues isoleucine 87–threonine 90, arginine 187, and aspartate 216 contribute to the substrate site. Aspartate 216 contributes to the Mg(2+) binding site.

The protein belongs to the inositol monophosphatase superfamily. Mg(2+) serves as cofactor.

The catalysed reaction is a myo-inositol phosphate + H2O = myo-inositol + phosphate. It functions in the pathway polyol metabolism; myo-inositol biosynthesis; myo-inositol from D-glucose 6-phosphate: step 2/2. Its function is as follows. Catalyzes the dephosphorylation of inositol 1-phosphate (I-1-P) to yield free myo-inositol, a key metabolite in mycobacteria. This Mycobacterium tuberculosis (strain ATCC 25618 / H37Rv) protein is Probable inositol 1-monophosphatase ImpA (impA).